The primary structure comprises 577 residues: MTAWSLHELWKTSHSTLFQVTLATVLMAPVLGDCGPPPSLPFASPISQLDEVSFPPGAVLKYTCHHGFKRTNSSHITCDENGSWVYTTFCARKRCKNPGELVNGKIEILSDLLVGLNIEFSCSEGYLLIGSATSRCEVQGKGVNWSDSLPECVIATCEPPPVINNGKHSGREEDLYTYGSMVIYSCDPSYTLFGNASIVCTVVNKTVGVWSPHPPACEKIVCHQPQIPKGELVPGFRHFHTYKDALEIRCKKGFALRGNSVIHCEANGEWFPSVPTCEPNGCIDIPDISYASWDGNRFPLENTAVFEIGTKLKYRCKPGYRANVHDVQIVTCQENLTWSSPSGCERVCCPTPNMEKIKIVSERRDFTGTCVYAYGDYVFYICSEGTYPMTTDGRSSCQADGKWDPAIPSCEADPSLQNHFALTFPNISETNVTNRTYLLENENATESFIKAVCPKPEIINGNLSVEKEIYAEMENITIQCDSGYDLVGSSNIICLENRTWYPDIPFCIMEGPEDCEIVNKGRQLLQCLSSPEDVQRALEVYKLSLEIERLEQQREKRTSVHRKAHYTKVDGPFRPFS.

A signal peptide spans 1 to 32 (MTAWSLHELWKTSHSTLFQVTLATVLMAPVLG). Sushi domains lie at 33 to 92 (DCGP…FCAR), 93 to 154 (KRCK…ECVI), 155 to 219 (ATCE…ACEK), 220 to 279 (IVCH…TCEP), 280 to 346 (NGCI…GCER), and 347 to 412 (VCCP…SCEA). Intrachain disulfides connect cysteine 34/cysteine 78, cysteine 64/cysteine 90, cysteine 95/cysteine 136, cysteine 122/cysteine 152, cysteine 157/cysteine 200, cysteine 186/cysteine 217, cysteine 222/cysteine 264, cysteine 250/cysteine 277, cysteine 282/cysteine 332, cysteine 316/cysteine 344, cysteine 349/cysteine 397, and cysteine 382/cysteine 410. Residues asparagine 72 and asparagine 81 are each glycosylated (N-linked (GlcNAc...) asparagine). N-linked (GlcNAc...) asparagine glycosylation is found at asparagine 144, asparagine 195, and asparagine 204. N-linked (GlcNAc...) asparagine glycosylation is present at asparagine 335. N-linked (GlcNAc...) asparagine glycans are attached at residues asparagine 426, asparagine 431, asparagine 434, asparagine 443, asparagine 462, asparagine 475, and asparagine 497. Residues 451–509 (AVCPKPEIINGNLSVEKEIYAEMENITIQCDSGYDLVGSSNIICLENRTWYPDIPFCIM) enclose the Sushi 7 domain. Disulfide bonds link cysteine 453–cysteine 494 and cysteine 480–cysteine 507.

As to quaternary structure, homomultimer; disulfide-linked. In terms of processing, glycosylated. Testis specific.

The protein localises to the cytoplasmic vesicle. The protein resides in the secretory vesicle. It localises to the acrosome lumen. Binds to ZP3 glycoprotein in egg zona pellucida. Probably involved in interactions between sperm acrosome and egg zona pellucida during and immediately following the acrosome reaction. The polypeptide is Zona pellucida sperm-binding protein 3 receptor (Zp3r) (Rattus norvegicus (Rat)).